Here is a 250-residue protein sequence, read N- to C-terminus: Probable aquaporin TIP1-1 (250 aa).

2 helical membrane-spanning segments follow: residues Ala25–Phe44 and Leu58–Ala77. An NPA 1 motif is present at residues Asn85–Ala87. Transmembrane regions (helical) follow at residues Gly103–Leu121, Leu144–Val163, and Leu170–Phe192. Positions Asn198–Ala200 match the NPA 2 motif. Residues Trp216–Tyr233 form a helical membrane-spanning segment.

It belongs to the MIP/aquaporin (TC 1.A.8) family. TIP (TC 1.A.8.10) subfamily. As to expression, expressed in roots and leaves.

Its subcellular location is the vacuole membrane. Functionally, aquaporins facilitate the transport of water and small neutral solutes across cell membranes. May be involved in transport from the vacuolar compartment to the cytoplasm. This Oryza sativa subsp. japonica (Rice) protein is Probable aquaporin TIP1-1 (TIP1-1).